Consider the following 386-residue polypeptide: Methylthioribose-1-phosphate isomerase (386 aa).

D255 serves as the catalytic Proton donor.

This sequence belongs to the eIF-2B alpha/beta/delta subunits family. MtnA subfamily.

The protein resides in the cytoplasm. Its subcellular location is the nucleus. The catalysed reaction is 5-(methylsulfanyl)-alpha-D-ribose 1-phosphate = 5-(methylsulfanyl)-D-ribulose 1-phosphate. It participates in amino-acid biosynthesis; L-methionine biosynthesis via salvage pathway; L-methionine from S-methyl-5-thio-alpha-D-ribose 1-phosphate: step 1/6. Catalyzes the interconversion of methylthioribose-1-phosphate (MTR-1-P) into methylthioribulose-1-phosphate (MTRu-1-P). This Trypanosoma brucei brucei (strain 927/4 GUTat10.1) protein is Methylthioribose-1-phosphate isomerase.